The primary structure comprises 387 residues: Phosphoglycerate kinase (387 aa).

Residues 21–23, R36, 59–62, R113, and R146 each bind substrate; these read DLN and HLGR. Residues K197, E314, and 340 to 343 contribute to the ATP site; that span reads GGDT.

It belongs to the phosphoglycerate kinase family. In terms of assembly, monomer.

The protein localises to the cytoplasm. The catalysed reaction is (2R)-3-phosphoglycerate + ATP = (2R)-3-phospho-glyceroyl phosphate + ADP. It participates in carbohydrate degradation; glycolysis; pyruvate from D-glyceraldehyde 3-phosphate: step 2/5. The protein is Phosphoglycerate kinase of Enterobacter sp. (strain 638).